Here is a 59-residue protein sequence, read N- to C-terminus: MEGMIRIKLYRSPICTPDKQKRVVKGLGLRKVNQIVERPDTPVFRGMVKKIPHLLMVVE.

Belongs to the universal ribosomal protein uL30 family. Part of the 50S ribosomal subunit.

This is Large ribosomal subunit protein uL30 from Solibacter usitatus (strain Ellin6076).